The primary structure comprises 305 residues: Lipoyl synthase (305 aa).

[4Fe-4S] cluster-binding residues include Cys41, Cys46, Cys52, Cys68, Cys72, Cys75, and Ser281. Residues 54-270 enclose the Radical SAM core domain; it reads GARRTATFMI…RKVAMDKGFK (217 aa). Positions 283-298 are enriched in basic and acidic residues; it reads HADEQVNEAAKEKQRQ. Residues 283 to 305 form a disordered region; it reads HADEQVNEAAKEKQRQGEAQLNS.

The protein belongs to the radical SAM superfamily. Lipoyl synthase family. The cofactor is [4Fe-4S] cluster.

Its subcellular location is the cytoplasm. The enzyme catalyses [[Fe-S] cluster scaffold protein carrying a second [4Fe-4S](2+) cluster] + N(6)-octanoyl-L-lysyl-[protein] + 2 oxidized [2Fe-2S]-[ferredoxin] + 2 S-adenosyl-L-methionine + 4 H(+) = [[Fe-S] cluster scaffold protein] + N(6)-[(R)-dihydrolipoyl]-L-lysyl-[protein] + 4 Fe(3+) + 2 hydrogen sulfide + 2 5'-deoxyadenosine + 2 L-methionine + 2 reduced [2Fe-2S]-[ferredoxin]. Its pathway is protein modification; protein lipoylation via endogenous pathway; protein N(6)-(lipoyl)lysine from octanoyl-[acyl-carrier-protein]. Its function is as follows. Catalyzes the radical-mediated insertion of two sulfur atoms into the C-6 and C-8 positions of the octanoyl moiety bound to the lipoyl domains of lipoate-dependent enzymes, thereby converting the octanoylated domains into lipoylated derivatives. The polypeptide is Lipoyl synthase (Staphylococcus aureus (strain Mu3 / ATCC 700698)).